The chain runs to 256 residues: Small ribosomal subunit protein uS2 (256 aa).

The protein belongs to the universal ribosomal protein uS2 family.

This is Small ribosomal subunit protein uS2 from Geotalea uraniireducens (strain Rf4) (Geobacter uraniireducens).